The primary structure comprises 374 residues: MSDNSQKKVIVGMSGGVDSSVSAYLLKQQGYQVEGLFMKNWEEDDNEEYCTAAEDLADAQAVCDKLDIHLHTINFAAEYWDNVFEYFLAEYKAGRTPNPDILCNKEIKFKAFLEFADEVLDADYIAMGHYVRRSFPENDEKPQMLRGLDSNKDQSYFLYTLSNEQIARSLFPVGDLEKPEVRRIAEEQDLITAKKKDSTGICFIGERKFTEFLGRYLPAQPGNIETPEGEVIGQHQGLMYHTLGQRKGLHIGGRKGGGGNEDPWFVGEKDLERNVLIAVQGKDHPMLKSEGLLASQLHWVDREPIRDVMKCTVKTRYRQEDIPCTIIPIDDENIKVIFDEPQIAVTPGQSAVFYKDDVCLGGSIIEQRIKYSQA.

ATP-binding positions include 12-19 (GMSGGVDS) and Met-38. The interval 98 to 100 (NPD) is interaction with target base in tRNA. The active-site Nucleophile is the Cys-103. The cysteines at positions 103 and 202 are disulfide-linked. Residue Gly-128 coordinates ATP. The segment at 152 to 154 (KDQ) is interaction with tRNA. Cys-202 functions as the Cysteine persulfide intermediate in the catalytic mechanism. Residues 316–317 (RY) form an interaction with tRNA region.

The protein belongs to the MnmA/TRMU family.

The protein localises to the cytoplasm. It carries out the reaction S-sulfanyl-L-cysteinyl-[protein] + uridine(34) in tRNA + AH2 + ATP = 2-thiouridine(34) in tRNA + L-cysteinyl-[protein] + A + AMP + diphosphate + H(+). Functionally, catalyzes the 2-thiolation of uridine at the wobble position (U34) of tRNA, leading to the formation of s(2)U34. The polypeptide is tRNA-specific 2-thiouridylase MnmA (Vibrio campbellii (strain ATCC BAA-1116)).